The chain runs to 242 residues: Glucosamine-6-phosphate deaminase (242 aa).

Asp71 (proton acceptor; for enolization step) is an active-site residue. Asn142 serves as the catalytic For ring-opening step. Residue His144 is the Proton acceptor; for ring-opening step of the active site. The active-site For ring-opening step is the Glu149.

Belongs to the glucosamine/galactosamine-6-phosphate isomerase family. NagB subfamily.

It catalyses the reaction alpha-D-glucosamine 6-phosphate + H2O = beta-D-fructose 6-phosphate + NH4(+). It functions in the pathway amino-sugar metabolism; N-acetylneuraminate degradation; D-fructose 6-phosphate from N-acetylneuraminate: step 5/5. Its function is as follows. Catalyzes the reversible isomerization-deamination of glucosamine 6-phosphate (GlcN6P) to form fructose 6-phosphate (Fru6P) and ammonium ion. The chain is Glucosamine-6-phosphate deaminase from Malacoplasma penetrans (strain HF-2) (Mycoplasma penetrans).